A 360-amino-acid chain; its full sequence is uncharacterized protein (360 aa).

The protein to P.multocida PM1082.

This is an uncharacterized protein from Pasteurella multocida (strain Pm70).